The chain runs to 499 residues: Serine carboxypeptidase-like 34 (499 aa).

An N-terminal signal peptide occupies residues 1-25 (MGSHSVEFSVLVLFLVSFLLGSTSA). Residues Asn73, Asn124, and Asn158 are each glycosylated (N-linked (GlcNAc...) asparagine). 3 disulfides stabilise this stretch: Cys106-Cys383, Cys269-Cys280, and Cys304-Cys351. The active site involves Ser200. N-linked (GlcNAc...) asparagine glycans are attached at residues Asn310, Asn372, and Asn375. Residues Asp419 and His471 contribute to the active site.

This sequence belongs to the peptidase S10 family. Ubiquitous.

Its subcellular location is the secreted. In terms of biological role, probable carboxypeptidase. This is Serine carboxypeptidase-like 34 (SCPL34) from Arabidopsis thaliana (Mouse-ear cress).